The chain runs to 286 residues: Hydroxysteroid 11-beta-dehydrogenase 1-like protein (286 aa).

A signal peptide spans 1 to 17; that stretch reads MGIHIKRWCFIILVASA. Residues 39–65, 90–91, and 117–119 each bind NADP(+); these read GAST…TARR, DM, and NHI. Residue Ser168 coordinates substrate. Residue Tyr181 is the Proton acceptor of the active site. NADP(+) is bound by residues 181 to 185 and 214 to 220; these read YAASK and GLIDTQS.

It belongs to the short-chain dehydrogenases/reductases (SDR) family.

The protein resides in the secreted. It carries out the reaction cortisone + NADPH + H(+) = cortisol + NADP(+). Its function is as follows. Unidirectional NADP(+)-dependent cortisol dehydrogenase (in vitro). This chain is Hydroxysteroid 11-beta-dehydrogenase 1-like protein (hsd11b1l), found in Xenopus tropicalis (Western clawed frog).